A 696-amino-acid polypeptide reads, in one-letter code: Protein OS-9 homolog (696 aa).

The first 15 residues, 1 to 15, serve as a signal peptide directing secretion; it reads MLVVAFASLLGAARA. N-linked (GlcNAc...) asparagine glycans are attached at residues Asn-35, Asn-46, and Asn-68. An MRH domain is found at 106–224; the sequence is NQCLVSQNGF…QVIVPDLCQL (119 aa). An intrachain disulfide couples Cys-108 to Cys-121. Positions 116, 128, 178, 184, 206, and 212 each coordinate a mannooligosaccharide derivative. Disulfide bonds link Cys-177–Cys-210 and Cys-192–Cys-222. N-linked (GlcNAc...) asparagine glycosylation is found at Asn-276, Asn-290, and Asn-372. Disordered regions lie at residues 450-600 and 667-696; these read IEAS…DNSD and TLGN…DDEL. Polar residues predominate over residues 458-467; that stretch reads TKASESTPVS. Basic and acidic residues predominate over residues 482-498; that stretch reads RSRDKEEYFKENEKQGE. Composition is skewed to polar residues over residues 499–518, 528–553, and 585–597; these read ENNA…GTIS, NQKQ…SAND, and NIDN…TLND. N-linked (GlcNAc...) asparagine glycosylation is present at Asn-588. Basic and acidic residues predominate over residues 685–696; the sequence is ESDRNGVIDDEL.

It belongs to the OS-9 family. In terms of assembly, interacts with missfolded ER lumenal proteins.

The protein localises to the endoplasmic reticulum membrane. Lectin involved in the quality control of the secretory pathway. As a member of the endoplasmic reticulum-associated degradation lumenal (ERAD-L) surveillance system, targets misfolded endoplasmic reticulum lumenal glycoproteins for degradation. This Candida glabrata (strain ATCC 2001 / BCRC 20586 / JCM 3761 / NBRC 0622 / NRRL Y-65 / CBS 138) (Yeast) protein is Protein OS-9 homolog (YOS9).